The following is an 820-amino-acid chain: Sucrose synthase 2 (820 aa).

Residues methionine 276–threonine 753 form a GT-B glycosyltransferase region.

The protein belongs to the glycosyltransferase 1 family. Plant sucrose synthase subfamily.

The enzyme catalyses an NDP-alpha-D-glucose + D-fructose = a ribonucleoside 5'-diphosphate + sucrose + H(+). Its function is as follows. Sucrose-cleaving enzyme that provides UDP-glucose and fructose for various metabolic pathways. The protein is Sucrose synthase 2 of Tulipa gesneriana (Garden tulip).